We begin with the raw amino-acid sequence, 126 residues long: Aspartate 1-decarboxylase (126 aa).

The Schiff-base intermediate with substrate; via pyruvic acid role is filled by S25. S25 carries the post-translational modification Pyruvic acid (Ser). Residue T57 coordinates substrate. Y58 acts as the Proton donor in catalysis. A substrate-binding site is contributed by 73-75 (GAA).

The protein belongs to the PanD family. As to quaternary structure, heterooctamer of four alpha and four beta subunits. The cofactor is pyruvate. Post-translationally, is synthesized initially as an inactive proenzyme, which is activated by self-cleavage at a specific serine bond to produce a beta-subunit with a hydroxyl group at its C-terminus and an alpha-subunit with a pyruvoyl group at its N-terminus.

The protein resides in the cytoplasm. It catalyses the reaction L-aspartate + H(+) = beta-alanine + CO2. It functions in the pathway cofactor biosynthesis; (R)-pantothenate biosynthesis; beta-alanine from L-aspartate: step 1/1. Its function is as follows. Catalyzes the pyruvoyl-dependent decarboxylation of aspartate to produce beta-alanine. The chain is Aspartate 1-decarboxylase from Alkalilimnicola ehrlichii (strain ATCC BAA-1101 / DSM 17681 / MLHE-1).